A 322-amino-acid polypeptide reads, in one-letter code: UDP-N-acetylenolpyruvoylglucosamine reductase (322 aa).

The FAD-binding PCMH-type domain maps to 36–202 (RAGGPAQVLF…TSVLFEGVPG (167 aa)). The active site involves Arg-182. Ser-231 serves as the catalytic Proton donor. Glu-301 is a catalytic residue.

The protein belongs to the MurB family. Requires FAD as cofactor.

Its subcellular location is the cytoplasm. It carries out the reaction UDP-N-acetyl-alpha-D-muramate + NADP(+) = UDP-N-acetyl-3-O-(1-carboxyvinyl)-alpha-D-glucosamine + NADPH + H(+). Its pathway is cell wall biogenesis; peptidoglycan biosynthesis. Its function is as follows. Cell wall formation. This Brucella suis biovar 1 (strain 1330) protein is UDP-N-acetylenolpyruvoylglucosamine reductase.